The sequence spans 320 residues: Arginine/serine-rich protein 1 (320 aa).

Residues 1-22 (MKTEASPGRLHEDVKLIFDKKA) show a composition bias toward basic and acidic residues. Disordered stretches follow at residues 1 to 180 (MKTE…SRER) and 215 to 299 (LKEM…ADIV). Composition is skewed to low complexity over residues 24-48 (SGRSSSCSSSSSSSSGSSYSSSRGS) and 56-74 (TSSSSRSSSSGSSSSSNSR). Basic residues-rich tracts occupy residues 75-102 (SRSRPRCSGRVHCRHRHRSPPRRYRARS), 114-158 (RRRH…RYRC), and 166-175 (RSPRPYRSRS). 2 positions are modified to phosphoserine: Ser135 and Ser137. The span at 215–238 (LKEMEQQEERKRRSSSDEEERVRV) shows a compositional bias: basic and acidic residues. The span at 271–293 (VFSNNNAIAKPSSSPTLSDSKVT) shows a compositional bias: polar residues.

This sequence belongs to the RSRP family. Post-translationally, phosphorylated. Phosphorylation at Ser-135 and Ser-137 mediates the interaction with spliceosome proteins.

It is found in the nucleus. In terms of biological role, probably acts as a spliceosomal factor that contributes to spliceosome assembly and regulates the isoform switching of proteins such as PARP6. The protein is Arginine/serine-rich protein 1 (rsrp1) of Danio rerio (Zebrafish).